The chain runs to 308 residues: Putative mitochondrial transporter UCP3 (308 aa).

The Mitochondrial intermembrane segment spans residues 1–10 (MVGLQPSEVP). Residues 11-32 (PTTVVKFLGAGTAACFADLLTF) form a helical membrane-spanning segment. Solcar repeat units lie at residues 11–102 (PTTV…VKQF), 111–202 (SSVA…IKEK), and 211–296 (DNFP…LKRA). At 33–73 (PLDTAKVRLQIQGENPGAQSVQYRGVLGTILTMVRTEGPRS) the chain is on the mitochondrial matrix side. The chain crosses the membrane as a helical span at residues 74–96 (PYSGLVAGLHRQMSFASIRIGLY). Over 97–116 (DSVKQFYTPKGADHSSVAIR) the chain is Mitochondrial intermembrane. Residues 117–133 (ILAGCTTGAMAVTCAQP) traverse the membrane as a helical segment. Residues 134 to 179 (TDVVKVRFQAMIRLGTGGERKYRGTMDAYRTIAREEGVRGLWKGTW) lie on the Mitochondrial matrix side of the membrane. The helical transmembrane segment at 180-196 (PNITRNAIVNCAEMVTY) threads the bilayer. At 197–213 (DIIKEKLLESHLFTDNF) the chain is on the mitochondrial intermembrane side. Residues 214-233 (PCHFVSAFGAGFCATVVASP) traverse the membrane as a helical segment. The Mitochondrial matrix segment spans residues 234–267 (VDVVKTRYMNAPLGRYRSPLHCMLKMVAQEGPTA). A helical transmembrane segment spans residues 268–290 (FYKGFVPSFLRLGAWNVMMFVTY). A purine nucleotide binding region spans residues 275–297 (SFLRLGAWNVMMFVTYEQLKRAL). The Mitochondrial intermembrane portion of the chain corresponds to 291–308 (EQLKRALMKVQVLRESPF).

This sequence belongs to the mitochondrial carrier (TC 2.A.29) family. As to quaternary structure, interacts with HAX1; the interaction is direct and calcium-dependent.

It is found in the mitochondrion inner membrane. With respect to regulation, inhibited by purine nucleotides and inorganic phosphate (in vitro). In terms of biological role, putative transmembrane transporter that plays a role in mitochondrial metabolism via an as yet unclear mechanism. Originally, this mitochondrial protein was thought to act as a proton transmembrane transporter from the mitochondrial intermembrane space into the matrix, causing proton leaks through the inner mitochondrial membrane, thereby uncoupling mitochondrial membrane potential generation from ATP synthesis. However, this function is controversial and uncoupling may not be the function, or at least not the main function, but rather a consequence of more conventional metabolite transporter activity. The polypeptide is Putative mitochondrial transporter UCP3 (Mus musculus (Mouse)).